The primary structure comprises 649 residues: 1-deoxy-D-xylulose-5-phosphate synthase 1 (649 aa).

Thiamine diphosphate is bound by residues histidine 79 and 120–122 (AHS). Aspartate 151 provides a ligand contact to Mg(2+). Thiamine diphosphate is bound by residues 152 to 153 (GS), asparagine 180, tyrosine 289, and glutamate 371. A Mg(2+)-binding site is contributed by asparagine 180.

This sequence belongs to the transketolase family. DXPS subfamily. Homodimer. Mg(2+) serves as cofactor. It depends on thiamine diphosphate as a cofactor.

The catalysed reaction is D-glyceraldehyde 3-phosphate + pyruvate + H(+) = 1-deoxy-D-xylulose 5-phosphate + CO2. The protein operates within metabolic intermediate biosynthesis; 1-deoxy-D-xylulose 5-phosphate biosynthesis; 1-deoxy-D-xylulose 5-phosphate from D-glyceraldehyde 3-phosphate and pyruvate: step 1/1. Its function is as follows. Catalyzes the acyloin condensation reaction between C atoms 2 and 3 of pyruvate and glyceraldehyde 3-phosphate to yield 1-deoxy-D-xylulose-5-phosphate (DXP). In Zymomonas mobilis subsp. mobilis (strain ATCC 31821 / ZM4 / CP4), this protein is 1-deoxy-D-xylulose-5-phosphate synthase 1.